The sequence spans 56 residues: Male-specific sperm protein Mst87F (56 aa).

The protein belongs to the MST(3)CGP family. As to expression, testis.

This chain is Male-specific sperm protein Mst87F (Mst87F), found in Drosophila melanogaster (Fruit fly).